Here is a 214-residue protein sequence, read N- to C-terminus: Phosphoenolpyruvate guanylyltransferase (214 aa).

Residues threonine 139, glycine 155, and serine 158 each coordinate phosphoenolpyruvate.

The protein belongs to the CofC family.

The enzyme catalyses phosphoenolpyruvate + GTP + H(+) = enolpyruvoyl-2-diphospho-5'-guanosine + diphosphate. It participates in cofactor biosynthesis; coenzyme F420 biosynthesis. Guanylyltransferase that catalyzes the activation of phosphoenolpyruvate (PEP) as enolpyruvoyl-2-diphospho-5'-guanosine, via the condensation of PEP with GTP. It is involved in the biosynthesis of coenzyme F420, a hydride carrier cofactor. This is Phosphoenolpyruvate guanylyltransferase from Salinispora arenicola (strain CNS-205).